The sequence spans 226 residues: Membrane protein (226 aa).

Over Met1–Val11 the chain is Virion surface. A helical transmembrane segment spans residues Ile12 to Val32. Over Leu33–Ser41 the chain is Intravirion. The chain crosses the membrane as a helical span at residues Val42 to Leu62. Over Ser63–Trp75 the chain is Virion surface. The helical transmembrane segment at Val76–Phe96 threads the bilayer. Residues Val97–Val226 are Intravirion-facing. The segment at Arg200–Leu216 is interaction with N protein.

The protein belongs to the alphacoronaviruses M protein family. Homomultimer. Interacts with envelope E protein in the budding compartment of the host cell, which is located between endoplasmic reticulum and the Golgi complex. Forms a complex with HE and S proteins. Interacts with nucleocapsid N protein. This interaction probably participates in RNA packaging into the virus.

It localises to the virion membrane. It is found in the host Golgi apparatus membrane. Functionally, component of the viral envelope that plays a central role in virus morphogenesis and assembly via its interactions with other viral proteins. The sequence is that of Membrane protein from Sus scrofa (Pig).